A 156-amino-acid chain; its full sequence is Ribosomal RNA large subunit methyltransferase H (156 aa).

S-adenosyl-L-methionine contacts are provided by residues L73, G104, and 123-128; that span reads LSAMTL.

The protein belongs to the RNA methyltransferase RlmH family. In terms of assembly, homodimer.

Its subcellular location is the cytoplasm. It carries out the reaction pseudouridine(1915) in 23S rRNA + S-adenosyl-L-methionine = N(3)-methylpseudouridine(1915) in 23S rRNA + S-adenosyl-L-homocysteine + H(+). Functionally, specifically methylates the pseudouridine at position 1915 (m3Psi1915) in 23S rRNA. This Laribacter hongkongensis (strain HLHK9) protein is Ribosomal RNA large subunit methyltransferase H.